The primary structure comprises 545 residues: Acetamidase (545 aa).

Active-site charge relay system residues include Lys-130 and Ser-205. Ser-229 (acyl-ester intermediate) is an active-site residue.

It belongs to the amidase family.

It carries out the reaction a monocarboxylic acid amide + H2O = a monocarboxylate + NH4(+). It catalyses the reaction acetamide + H2O = acetate + NH4(+). Its function is as follows. Allows acetamide to be used as a sole carbon or nitrogen source. The chain is Acetamidase (amdS) from Aspergillus oryzae (strain ATCC 42149 / RIB 40) (Yellow koji mold).